We begin with the raw amino-acid sequence, 156 residues long: RNA pyrophosphohydrolase (156 aa).

The region spanning 6 to 148 (NYRPNVAAIV…KKNIYVKVIK (143 aa)) is the Nudix hydrolase domain. The Nudix box signature appears at 43 to 64 (GGIDKGESAKNALFRELKEEIG).

This sequence belongs to the Nudix hydrolase family. RppH subfamily. A divalent metal cation serves as cofactor.

Its function is as follows. Accelerates the degradation of transcripts by removing pyrophosphate from the 5'-end of triphosphorylated RNA, leading to a more labile monophosphorylated state that can stimulate subsequent ribonuclease cleavage. This chain is RNA pyrophosphohydrolase, found in Campylobacter jejuni subsp. doylei (strain ATCC BAA-1458 / RM4099 / 269.97).